We begin with the raw amino-acid sequence, 551 residues long: MNRRRFLQGSLAMAALSGTTGLSTLFSRAAFAADSDIADGQSRRFDFSVLQSMAHDLAQTPWGGAPRPLPNTLATMTPQAYNAIQYDAKQSLWNNIEDRQLDVQFFHMGMGFRRRVRMFSLDSASSQAREIHFRPELFNYNDAGVDTKQLEGQSDLGFAGFRAFKAPELARRDIVSFLGASYFRAVDDTYQYGLSARGLAIDTFTDTPEEFPDFTSFWFETVKPGDTTFTVYTLLDSPSITGAYKFVIHCEKSQVIMEVDNHLYARKDIKQLGISPMTSMFACGNNERRMCDTIHPQIHDSDRLAMWRGNGEWICRPLNNPQKLQFNAYQDKNPKGFGLLQLDRDFSHYQDIMGWYNKRPSLWVEPRNQWGKGSVGLMEIPTTGETLDNVVCFWQPEKPVKAGDELDFKYRLYWSAQPPVRSPLANVYATRTGMGGFPEGWAPGENYPKTWARRFAIDFVGGDLKAAAPKGIEPVITLSNGEARQVEILYVEPFDGYRILFDWYPTNDSTDPIDMRMFLRCQGDAISETWLYQYFPPAPDKRVYVDDRVMR.

Residues 1–32 (MNRRRFLQGSLAMAALSGTTGLSTLFSRAAFA) constitute a signal peptide (tat-type signal).

This sequence belongs to the OpgD/OpgG family. Post-translationally, predicted to be exported by the Tat system. The position of the signal peptide cleavage has not been experimentally proven.

It localises to the periplasm. Its pathway is glycan metabolism; osmoregulated periplasmic glucan (OPG) biosynthesis. In terms of biological role, probably involved in the control of the structural glucose backbone of osmoregulated periplasmic glucans (OPGs). The protein is Glucans biosynthesis protein D of Enterobacter sp. (strain 638).